We begin with the raw amino-acid sequence, 129 residues long: uncharacterized protein (129 aa).

The chain crosses the membrane as a helical span at residues 8–24 (YLILFITIIAICSLFRI).

The protein localises to the membrane. This is an uncharacterized protein from Rickettsia prowazekii (strain Madrid E).